The chain runs to 128 residues: Large ribosomal subunit protein bL12 (128 aa).

Belongs to the bacterial ribosomal protein bL12 family. As to quaternary structure, homodimer. Part of the ribosomal stalk of the 50S ribosomal subunit. Forms a multimeric L10(L12)X complex, where L10 forms an elongated spine to which 2 to 4 L12 dimers bind in a sequential fashion. Binds GTP-bound translation factors.

Forms part of the ribosomal stalk which helps the ribosome interact with GTP-bound translation factors. Is thus essential for accurate translation. This is Large ribosomal subunit protein bL12 from Thermosipho africanus (strain TCF52B).